Here is a 1454-residue protein sequence, read N- to C-terminus: Coiled-coil domain-containing protein 18 (1454 aa).

Serine 45 is subject to Phosphoserine. Coiled-coil stretches lie at residues alanine 107 to methionine 138, isoleucine 170 to leucine 402, lysine 438 to alanine 464, and threonine 508 to glutamate 1309. A disordered region spans residues glutamine 828–glutamate 851. Serine 1355 carries the phosphoserine modification.

Its subcellular location is the cytoplasm. The protein resides in the cytoskeleton. It localises to the microtubule organizing center. It is found in the centrosome. The protein localises to the centriolar satellite. In Homo sapiens (Human), this protein is Coiled-coil domain-containing protein 18 (CCDC18).